A 655-amino-acid polypeptide reads, in one-letter code: p-hydroxybenzoic acid efflux pump subunit AaeB (655 aa).

The Periplasmic segment spans residues 1–12; the sequence is MGIFSIANQHIR. A helical membrane pass occupies residues 13–33; it reads FAVKLATAIVLALFVGFHFQL. Residues 34–37 lie on the Cytoplasmic side of the membrane; it reads ETPR. Residues 38–58 traverse the membrane as a helical segment; that stretch reads WAVLTAAIVAAGPAFAAGGEP. Residues 59–68 lie on the Periplasmic side of the membrane; the sequence is YSGAIRYRGF. The chain crosses the membrane as a helical span at residues 69–89; the sequence is LRIIGTFIGCIAGLVIIIAMI. The Cytoplasmic portion of the chain corresponds to 90–92; the sequence is RAP. Residues 93 to 113 traverse the membrane as a helical segment; it reads LLMILVCCIWAGFCTWISSLV. Residues 114–120 lie on the Periplasmic side of the membrane; the sequence is RIENSYA. A helical transmembrane segment spans residues 121-141; that stretch reads WGLAGYTALIIVITIQPEPLL. Residues 142-151 are Cytoplasmic-facing; sequence TPQFAVERCS. A helical transmembrane segment spans residues 152–172; it reads EIVIGIVCAIMADLLFSPRSI. Residues 173 to 369 lie on the Periplasmic side of the membrane; it reads KQEVDRELES…RTTLSCILGT (197 aa). The helical transmembrane segment at 370–390 threads the bilayer; the sequence is LFWLWTGWTSGSGAMVMIAVV. The Cytoplasmic portion of the chain corresponds to 391-406; that stretch reads TSLAMRLPNPRMVAID. The chain crosses the membrane as a helical span at residues 407 to 427; it reads FIYGTLAALPLGLLYFLVIIP. Residues 428-430 lie on the Periplasmic side of the membrane; the sequence is NTQ. The chain crosses the membrane as a helical span at residues 431 to 451; it reads QSMLLLCISLAVLGFFLGIEV. Topologically, residues 452–458 are cytoplasmic; it reads QKRRLGS. The helical transmembrane segment at 459-479 threads the bilayer; the sequence is MGALASTINIIVLDNPMTFHF. Residues 480-481 lie on the Periplasmic side of the membrane; the sequence is SQ. The helical transmembrane segment at 482 to 502 threads the bilayer; that stretch reads FLDSALGQIVGCVLAFTVILL. Residues 503–655 are Cytoplasmic-facing; sequence VRDKSRDRTG…HKYQHALTDS (153 aa).

This sequence belongs to the aromatic acid exporter ArAE (TC 2.A.85) family.

Its subcellular location is the cell inner membrane. Its function is as follows. Forms an efflux pump with AaeA. Could function as a metabolic relief valve, allowing to eliminate certain compounds when they accumulate to high levels in the cell. The polypeptide is p-hydroxybenzoic acid efflux pump subunit AaeB (Shigella flexneri).